The primary structure comprises 43 residues: Cytochrome b559 subunit beta (43 aa).

A helical transmembrane segment spans residues 18–34; the sequence is WLAIHGLAIPTVFFLGG. H22 lines the heme pocket.

This sequence belongs to the PsbE/PsbF family. Heterodimer of an alpha subunit and a beta subunit. PSII is composed of 1 copy each of membrane proteins PsbA, PsbB, PsbC, PsbD, PsbE, PsbF, PsbH, PsbI, PsbJ, PsbK, PsbL, PsbM, PsbT, PsbX, PsbY, PsbZ, Psb30/Ycf12, at least 3 peripheral proteins of the oxygen-evolving complex and a large number of cofactors. It forms dimeric complexes. It depends on heme b as a cofactor.

The protein resides in the plastid. It localises to the chloroplast thylakoid membrane. Functionally, this b-type cytochrome is tightly associated with the reaction center of photosystem II (PSII). PSII is a light-driven water:plastoquinone oxidoreductase that uses light energy to abstract electrons from H(2)O, generating O(2) and a proton gradient subsequently used for ATP formation. It consists of a core antenna complex that captures photons, and an electron transfer chain that converts photonic excitation into a charge separation. This Trieres chinensis (Marine centric diatom) protein is Cytochrome b559 subunit beta.